The primary structure comprises 62 residues: Small ribosomal subunit protein eS27 (62 aa).

Residues C17, C20, C36, and C39 each contribute to the Zn(2+) site. The C4-type zinc finger occupies 17 to 39; it reads CPDCDNEQTVFSKASTTVKCVVC.

Belongs to the eukaryotic ribosomal protein eS27 family. As to quaternary structure, part of the 30S ribosomal subunit. It depends on Zn(2+) as a cofactor.

The chain is Small ribosomal subunit protein eS27 from Methanoregula boonei (strain DSM 21154 / JCM 14090 / 6A8).